The chain runs to 375 residues: Succinyl-diaminopimelate desuccinylase (375 aa).

His66 serves as a coordination point for Zn(2+). Asp68 is a catalytic residue. Zn(2+) is bound at residue Asp99. Glu133 serves as the catalytic Proton acceptor. Residues Glu134, Glu162, and His348 each contribute to the Zn(2+) site.

Belongs to the peptidase M20A family. DapE subfamily. In terms of assembly, homodimer. Requires Zn(2+) as cofactor. Co(2+) serves as cofactor.

It catalyses the reaction N-succinyl-(2S,6S)-2,6-diaminopimelate + H2O = (2S,6S)-2,6-diaminopimelate + succinate. The protein operates within amino-acid biosynthesis; L-lysine biosynthesis via DAP pathway; LL-2,6-diaminopimelate from (S)-tetrahydrodipicolinate (succinylase route): step 3/3. Functionally, catalyzes the hydrolysis of N-succinyl-L,L-diaminopimelic acid (SDAP), forming succinate and LL-2,6-diaminopimelate (DAP), an intermediate involved in the bacterial biosynthesis of lysine and meso-diaminopimelic acid, an essential component of bacterial cell walls. This is Succinyl-diaminopimelate desuccinylase from Yersinia pseudotuberculosis serotype O:1b (strain IP 31758).